Reading from the N-terminus, the 335-residue chain is 2-acylglycerol O-acyltransferase 1 (335 aa).

The next 2 membrane-spanning stretches (helical) occupy residues 24 to 44 (WVFS…SLVL) and 47 to 67 (LWLI…TPQA). 3 N-linked (GlcNAc...) asparagine glycosylation sites follow: N77, N125, and N180.

This sequence belongs to the diacylglycerol acyltransferase family.

It localises to the endoplasmic reticulum membrane. It catalyses the reaction a 2-acylglycerol + an acyl-CoA = a 1,2-diacylglycerol + CoA. It carries out the reaction a 2-acylglycerol + an acyl-CoA = a 1,2-diacyl-sn-glycerol + CoA. The catalysed reaction is a 2-acylglycerol + an acyl-CoA = a 2,3-diacyl-sn-glycerol + CoA. The enzyme catalyses a 1-acylglycerol + an acyl-CoA = a 1,2-diacylglycerol + CoA. It catalyses the reaction a 1-acylglycerol + an acyl-CoA = a 1,3-diacylglycerol + CoA. It carries out the reaction a 1-acyl-sn-glycerol + an acyl-CoA = a 1,3-diacyl-sn-glycerol + CoA. The catalysed reaction is a 3-acyl-sn-glycerol + an acyl-CoA = a 1,3-diacyl-sn-glycerol + CoA. The protein operates within glycerolipid metabolism; triacylglycerol biosynthesis. In terms of biological role, involved in glycerolipid synthesis and lipid metabolism. Catalyzes the formation of diacylglycerol, the precursor of triacylglycerol, by transferring the acyl chain of a fatty acyl-CoA to a monoacylglycerol, mainly at the sn-1 or sn-3 positions. It uses both sn-2-monoacylglycerol (2-acylglycerol) and sn-1-monoacylglycerol (1-acyl-sn-glycerol) equally well as substrates, and uses sn-3-monoacylglycerol (3-acyl-sn-glycerol) with lower efficiency. The sequence is that of 2-acylglycerol O-acyltransferase 1 (mogat1) from Xenopus tropicalis (Western clawed frog).